A 106-amino-acid chain; its full sequence is MESAGIQQLLAAEREAQQIVNAARTAKMTRLKQAKEEAETEVAEHKTSTEQGFQRKLEATSGDSGANVKRLEQETDAKIEQLKNEATRISKDVVDMLLKNVTTVNN.

The residue at position 1 (methionine 1) is an N-acetylmethionine. The tract at residues 31 to 67 (LKQAKEEAETEVAEHKTSTEQGFQRKLEATSGDSGAN) is disordered. The span at 33-58 (QAKEEAETEVAEHKTSTEQGFQRKLE) shows a compositional bias: basic and acidic residues.

This sequence belongs to the V-ATPase G subunit family. As to quaternary structure, V-ATPase is a heteromultimeric enzyme composed of a peripheral catalytic V1 complex (components A to H) attached to an integral membrane V0 proton pore complex (components: a, c, c'', d and e).

Its subcellular location is the vacuole membrane. In terms of biological role, catalytic subunit of the peripheral V1 complex of vacuolar ATPase (V-ATPase). V-ATPase is responsible for acidifying a variety of intracellular compartments in eukaryotic cells. The sequence is that of V-type proton ATPase subunit G2 (VHA-G2) from Arabidopsis thaliana (Mouse-ear cress).